The chain runs to 459 residues: MSFRFNEAVFGDNSFNERVREKLSTALNSPSKKKLDILKSGIKVQKVDFPTIPQLEILDLDIITQPKSLAKGICKISCKDAMLRIQTVIESNLLLISEQDTPSFTMPQLINNGSFTIPITMTFSSIELEAITNIFVKNPGIGISFNDVDLDFKFDCSVKILQSTIERRLKESMHVVFKDVLPSLIFNTSQNWFTNRGESTSTIPGKREHHHQQTTMSRNVILDGSDFQELSPINMLRLSSIVSSRSTLSLHSTVMNSLSAIPGCLERQNLYRFISRMPSLNNYYSSQSFPQPKSSTVSSKQLVKPFYCSHNLLPKTVLDSSQYDLATITKIQSRLFDRSNSNDDNAKPRRRKIKCKKTRTPSNLQSQGEQAVDDSTAIETVTSTPVQTPIPELEEQSPPYLKTTVSIRDKYVIPEKISLNLDSKKDTSKKKPFYFIGLNSQEPSNNWKWGMEDSPPPYH.

Residues 1 to 190 enclose the SMP-LTD domain; it reads MSFRFNEAVF…LPSLIFNTSQ (190 aa). Over residues 338 to 347 the composition is skewed to basic and acidic residues; sequence RSNSNDDNAK. The disordered stretch occupies residues 338–375; the sequence is RSNSNDDNAKPRRRKIKCKKTRTPSNLQSQGEQAVDDS. Residues 348–359 are compositionally biased toward basic residues; that stretch reads PRRRKIKCKKTR.

Belongs to the MDM34 family. In terms of assembly, component of the ER-mitochondria encounter structure (ERMES) or MDM complex, composed of MMM1, MDM10, MDM12 and MDM34. Ubiquitinated by a SCF (SKP1-CUL1-F-box protein) E3 ubiquitin-protein ligase complex containing the F-box protein MDM30. Ubiquitination is important for mitochondrial integrity.

It localises to the mitochondrion outer membrane. Its function is as follows. Component of the ERMES/MDM complex, which serves as a molecular tether to connect the endoplasmic reticulum (ER) and mitochondria. Components of this complex are involved in the control of mitochondrial shape and protein biogenesis, and function in nonvesicular lipid trafficking between the ER and mitochondria. MDM34 is required for the interaction of the ER-resident membrane protein MMM1 and the outer mitochondrial membrane-resident beta-barrel protein MDM10. The polypeptide is Mitochondrial distribution and morphology protein 34 (Saccharomyces cerevisiae (strain RM11-1a) (Baker's yeast)).